The primary structure comprises 24 residues: Coenzyme PQQ synthesis protein A (24 aa).

Positions 16–20 form a cross-link, pyrroloquinoline quinone (Glu-Tyr); sequence EVTMY.

It belongs to the PqqA family.

Its pathway is cofactor biosynthesis; pyrroloquinoline quinone biosynthesis. Required for coenzyme pyrroloquinoline quinone (PQQ) biosynthesis. PQQ is probably formed by cross-linking a specific glutamate to a specific tyrosine residue and excising these residues from the peptide. The sequence is that of Coenzyme PQQ synthesis protein A from Pseudomonas fluorescens (strain Pf0-1).